The sequence spans 172 residues: Biogenesis of lysosome-related organelles complex 1 subunit 6 (172 aa).

2 disordered regions span residues 1 to 36 and 135 to 172; these read MSVPGPPSPDGVLAGPPEGLEAGDLTPGLSDTSPDE and RALKLQQKRQKEELEREQQREKEFEREKQLTAKPAKRT. A coiled-coil region spans residues 125-167; the sequence is LHEKTSKLKKRALKLQQKRQKEELEREQQREKEFEREKQLTAK. Positions 143–164 are enriched in basic and acidic residues; sequence RQKEELEREQQREKEFEREKQL.

The protein belongs to the BLOC1S6 family. As to quaternary structure, homodimer. Octamer composed of one copy each BLOC1S1, BLOC1S2, BLOC1S3, BLOC1S4, BLOC1S5, BLOC1S6, DTNBP1/BLOC1S7 and SNAPIN/BLOC1S8. The BLOC-1 complex associates with the AP-3 protein complex and membrane protein cargos. Interacts with BLOC1S4, BLOC1S5, DTNBP1/BLOC1S7, F-actin. Component of the biogenesis of lysosome-related organelles complex 1 (BLOC-1) composed of BLOC1S1, BLOC1S2, BLOC1S3, BLOC1S4, BLOC1S5, BLOC1S6, DTNBP1/BLOC1S7 and SNAPIN/BLOC1S8. Interacts with SNAP25, SNAP47 and STX12.

It is found in the cytoplasm. Its subcellular location is the membrane. In terms of biological role, component of the BLOC-1 complex, a complex that is required for normal biogenesis of lysosome-related organelles (LRO), such as platelet dense granules and melanosomes. In concert with the AP-3 complex, the BLOC-1 complex is required to target membrane protein cargos into vesicles assembled at cell bodies for delivery into neurites and nerve terminals. The BLOC-1 complex, in association with SNARE proteins, is also proposed to be involved in neurite extension. May play a role in intracellular vesicle trafficking, particularly in the vesicle-docking and fusion process. This is Biogenesis of lysosome-related organelles complex 1 subunit 6 (BLOC1S6) from Bos taurus (Bovine).